The chain runs to 134 residues: uncharacterized protein (134 aa).

The next 3 membrane-spanning stretches (helical) occupy residues 9 to 29 (PYFL…HGTA), 49 to 69 (MLLV…LGLF), and 107 to 127 (ALLY…ACAL).

It belongs to the DoxX family.

The protein resides in the cell membrane. This is an uncharacterized protein from Haemophilus influenzae (strain ATCC 51907 / DSM 11121 / KW20 / Rd).